We begin with the raw amino-acid sequence, 537 residues long: MANSKYEYVKSFEVEDEVMFPNLIIIRIDGRDFSRFSQVHKFEKPNDETSLNLMNSCASSVLVEYPDIVFAYGYSDEYSFVFKKASRFYQRRASKILSLVASFFAAVYVTKWKEFFPHTKLEYAPSFASKVVSCASVEVLQAYLAWRQHDCHISNQYDTCLWMLVKSGKTLSETQEILKDTQKQQRNELLFQQFGINYKMLPVLFRQGSCLFKTKVIFSIISFFYFLLEETVKHDENGKPVKRLRRRETLVHSENVAGRSFWNEHSSLHKDLGHFAKDIGKIEPDYVKSFQFESRLLPLTWVVVRIDGCHFHRFSEVHEFEKPNDEQALKLMNSCAVAVLEEFQDIAFAYGVSDEFSFVLKNKSELYKRQSSKIISAVVSFFTSTYMMRWGDFFPHKKLKYPPSFDGRAVCYPTSDILLDYLAWRQVDCHINNQYNTCFWMLVKSGKSKIQAQDYLKGTQTREKNELLSQQFGIEYNSLPVIFRMGSSVFRLKTQEGVTEENGEVSGKQVEAEVGVDYSNIIDQCFWQQHPHILSFS.

Residues Asp-307, Gly-308, and Asp-354 each contribute to the Mg(2+) site. Residues 307 to 312 (DGCHFH) and 353 to 354 (SD) each bind GTP.

The protein belongs to the tRNA(His) guanylyltransferase family. It depends on Mg(2+) as a cofactor.

It is found in the nucleus. Its subcellular location is the nucleoplasm. The enzyme catalyses a 5'-end ribonucleotide-tRNA(His) + GTP + ATP + H2O = a 5'-end phospho-guanosine-ribonucleotide-tRNA(His) + AMP + 2 diphosphate + H(+). Its function is as follows. Adds a GMP to the 5'-end of tRNA(His) after transcription and RNase P cleavage. The sequence is that of tRNA(His) guanylyltransferase 2 (THG2) from Arabidopsis thaliana (Mouse-ear cress).